The primary structure comprises 287 residues: Protease HtpX (287 aa).

2 helical membrane-spanning segments follow: residues 4 to 24 (ILLFLATNLAVVLVLSVVLNI) and 36 to 56 (LSGLLVMAAVFGFGGAFISLL). His-143 is a Zn(2+) binding site. Residue Glu-144 is part of the active site. Residue His-147 coordinates Zn(2+). The next 2 membrane-spanning stretches (helical) occupy residues 158–178 (LMQGVVNTFVIFLSRFIANIV) and 192–212 (MVYFGVSMVLELVFGFLASFI). A Zn(2+)-binding site is contributed by Glu-221.

It belongs to the peptidase M48B family. Requires Zn(2+) as cofactor.

Its subcellular location is the cell inner membrane. This chain is Protease HtpX, found in Vibrio cholerae serotype O1 (strain ATCC 39315 / El Tor Inaba N16961).